The primary structure comprises 359 residues: Stearoyl-CoA desaturase (359 aa).

Topologically, residues 1-72 (MPAHLLQDDI…EGPSPKVEYV (72 aa)) are cytoplasmic. A helical transmembrane segment spans residues 73 to 93 (WRNIILMSLLHLGALYGITLI). Asparagine 75 contributes to the substrate binding site. At 94–97 (PTCK) the chain is on the lumenal side. Residues 98–118 (FYTWLWGVFYYFVSALGITAG) form a helical membrane-spanning segment. Over 119-217 (AHRLWSHRSY…EKLVMFQRRY (99 aa)) the chain is Cytoplasmic. Residues histidine 120 and histidine 125 each coordinate Fe cation. A Histidine box-1 motif is present at residues 120-125 (HRLWSH). Residues asparagine 148, arginine 155, and aspartate 156 each contribute to the substrate site. Residues histidine 157, histidine 160, and histidine 161 each coordinate Fe cation. A Histidine box-2 motif is present at residues 157-161 (HRAHH). Positions 188 and 189 each coordinate substrate. 2 positions are modified to phosphoserine: serine 198 and serine 203. A helical transmembrane segment spans residues 218 to 237 (YKPGLLMMCFILPTLVPWYF). The Lumenal portion of the chain corresponds to 238-241 (WGET). The chain crosses the membrane as a helical span at residues 242-263 (FQNSVFVATFLRYAVVLNATWL). Tryptophan 262 is a binding site for substrate. Residues 264–359 (VNSAAHLFGY…RTGDGNYKSG (96 aa)) lie on the Cytoplasmic side of the membrane. Residues histidine 269, histidine 298, histidine 301, and histidine 302 each contribute to the Fe cation site. The Histidine box-3 motif lies at 298-302 (HNYHH).

It belongs to the fatty acid desaturase type 1 family. In terms of assembly, may self-associate and form homodimers. The cofactor is Fe(2+). Detected in fetal liver, lung and brain. Highly expressed in adult adipose tissue, and at lower levels in adult brain and lung.

It localises to the endoplasmic reticulum membrane. It catalyses the reaction octadecanoyl-CoA + 2 Fe(II)-[cytochrome b5] + O2 + 2 H(+) = (9Z)-octadecenoyl-CoA + 2 Fe(III)-[cytochrome b5] + 2 H2O. It carries out the reaction hexadecanoyl-CoA + 2 Fe(II)-[cytochrome b5] + O2 + 2 H(+) = (9Z)-hexadecenoyl-CoA + 2 Fe(III)-[cytochrome b5] + 2 H2O. Functionally, stearoyl-CoA desaturase that utilizes O(2) and electrons from reduced cytochrome b5 to introduce the first double bond into saturated fatty acyl-CoA substrates. Catalyzes the insertion of a cis double bond at the delta-9 position into fatty acyl-CoA substrates including palmitoyl-CoA and stearoyl-CoA. Gives rise to a mixture of 16:1 and 18:1 unsaturated fatty acids. Plays an important role in lipid biosynthesis. Plays an important role in regulating the expression of genes that are involved in lipogenesis and in regulating mitochondrial fatty acid oxidation. Plays an important role in body energy homeostasis. Contributes to the biosynthesis of membrane phospholipids, cholesterol esters and triglycerides. The chain is Stearoyl-CoA desaturase (SCD) from Homo sapiens (Human).